The chain runs to 449 residues: 3-phosphoshikimate 1-carboxyvinyltransferase (449 aa).

Positions 28, 29, and 33 each coordinate 3-phosphoshikimate. Residue lysine 28 coordinates phosphoenolpyruvate. Phosphoenolpyruvate-binding residues include glycine 105 and arginine 133. Residues serine 179, glutamine 181, aspartate 332, and lysine 359 each contribute to the 3-phosphoshikimate site. Glutamine 181 serves as a coordination point for phosphoenolpyruvate. Aspartate 332 acts as the Proton acceptor in catalysis. The phosphoenolpyruvate site is built by arginine 363 and arginine 406.

Belongs to the EPSP synthase family. In terms of assembly, monomer.

Its subcellular location is the cytoplasm. The catalysed reaction is 3-phosphoshikimate + phosphoenolpyruvate = 5-O-(1-carboxyvinyl)-3-phosphoshikimate + phosphate. The protein operates within metabolic intermediate biosynthesis; chorismate biosynthesis; chorismate from D-erythrose 4-phosphate and phosphoenolpyruvate: step 6/7. Its function is as follows. Catalyzes the transfer of the enolpyruvyl moiety of phosphoenolpyruvate (PEP) to the 5-hydroxyl of shikimate-3-phosphate (S3P) to produce enolpyruvyl shikimate-3-phosphate and inorganic phosphate. In Nitrobacter winogradskyi (strain ATCC 25391 / DSM 10237 / CIP 104748 / NCIMB 11846 / Nb-255), this protein is 3-phosphoshikimate 1-carboxyvinyltransferase.